The chain runs to 238 residues: RxLR effector protein PITG_14788 (238 aa).

A signal peptide spans 1-23 (MKSLHAVNLVLLLLLACFAPAPA). Residues 47 to 65 (RLLRAHSSGKEEQKEEEER) carry the RxLR-dEER motif.

It belongs to the RxLR effector family.

The protein resides in the secreted. Its subcellular location is the host cytoplasm. The protein localises to the host cytoskeleton. It is found in the host nucleus. It localises to the host nucleolus. Its function is as follows. Effector that enhances P.infestans colonization of Nicotiana benthamiana leaves. The chain is RxLR effector protein PITG_14788 from Phytophthora infestans (strain T30-4) (Potato late blight agent).